The chain runs to 295 residues: ESX-3 secretion-associated protein EspG3 (295 aa).

Belongs to the EspG family. Interacts specifically with ESX-3-dependent PE/PPE proteins.

The protein localises to the cytoplasm. Its function is as follows. Specific chaperone for cognate PE/PPE proteins. Plays an important role in preventing aggregation of PE/PPE dimers. The sequence is that of ESX-3 secretion-associated protein EspG3 from Mycobacterium tuberculosis (strain CDC 1551 / Oshkosh).